Consider the following 33-residue polypeptide: U13-ctenitoxin-Pn1c (33 aa).

3 disulfide bridges follow: cysteine 3–cysteine 17, cysteine 10–cysteine 21, and cysteine 16–cysteine 30.

As to expression, expressed by the venom gland.

The protein localises to the secreted. Acts as a neurotoxin. In Phoneutria nigriventer (Brazilian armed spider), this protein is U13-ctenitoxin-Pn1c.